We begin with the raw amino-acid sequence, 65 residues long: Large ribosomal subunit protein bL35 (65 aa).

The segment at 1–22 (MPKIKTVRGAAKRFKKTGKGGF) is disordered. Basic residues predominate over residues 10-22 (AAKRFKKTGKGGF).

Belongs to the bacterial ribosomal protein bL35 family.

The protein is Large ribosomal subunit protein bL35 of Klebsiella pneumoniae (strain 342).